The chain runs to 237 residues: Speedy protein E4 (237 aa).

The segment at 1 to 61 is disordered; that stretch reads MASGQARPPF…KRKSEWSDES (61 aa).

It belongs to the Speedy/Ringo family. As to expression, predominantly expressed in testis.

This is Speedy protein E4 from Homo sapiens (Human).